The chain runs to 469 residues: Probable Xaa-Pro aminopeptidase PEPP (469 aa).

Residues D265, D276, E399, and E439 each contribute to the Mn(2+) site.

This sequence belongs to the peptidase M24B family. The cofactor is Mn(2+).

The enzyme catalyses Release of any N-terminal amino acid, including proline, that is linked to proline, even from a dipeptide or tripeptide.. Its function is as follows. Catalyzes the removal of a penultimate prolyl residue from the N-termini of peptides. The polypeptide is Probable Xaa-Pro aminopeptidase PEPP (PEPP) (Coccidioides posadasii (strain C735) (Valley fever fungus)).